Here is a 422-residue protein sequence, read N- to C-terminus: Replication factor C large subunit (422 aa).

63-70 (GPPGVGKT) lines the ATP pocket.

The protein belongs to the activator 1 small subunits family. RfcL subfamily. Heteromultimer composed of small subunits (RfcS) and large subunits (RfcL).

Functionally, part of the RFC clamp loader complex which loads the PCNA sliding clamp onto DNA. This Pyrobaculum aerophilum (strain ATCC 51768 / DSM 7523 / JCM 9630 / CIP 104966 / NBRC 100827 / IM2) protein is Replication factor C large subunit.